The primary structure comprises 371 residues: GDP-mannose 3,5-epimerase 2 (371 aa).

NAD(+) contacts are provided by residues 29 to 55, D53, and D73; that span reads GAGG…SDWK. Residues G98 and 138 to 140 each bind substrate; that span reads SAC. Residues Y168 and K172 each coordinate NAD(+). Y168 acts as the Proton acceptor in catalysis. Substrate-binding positions include N197, 210–212, K219, 235–237, R300, and S350; these read EKA and QTR.

Belongs to the NAD(P)-dependent epimerase/dehydratase family. NAD(+) serves as cofactor.

The enzyme catalyses GDP-alpha-D-mannose = GDP-beta-L-gulose. It catalyses the reaction GDP-beta-L-gulose = GDP-beta-L-galactose. It functions in the pathway cofactor biosynthesis; L-ascorbate biosynthesis via GDP-alpha-D-mannose pathway; L-ascorbate from GDP-alpha-D-mannose: step 1/5. Functionally, catalyzes a reversible epimerization of GDP-D-mannose that precedes the committed step in the biosynthesis of vitamin C (L-ascorbate), resulting in the hydrolysis of the highly energetic glycosyl-pyrophosphoryl linkage. Able to catalyze 2 distinct epimerization reactions and can release both GDP-L-galactose and GDP-L-gulose from GDP-mannose. This Oryza sativa subsp. japonica (Rice) protein is GDP-mannose 3,5-epimerase 2 (GME-2).